Here is a 490-residue protein sequence, read N- to C-terminus: Glutamate--tRNA ligase (490 aa).

The 'HIGH' region signature appears at 9–19; sequence PSPTGLQHIGG. A 'KMSKS' region motif is present at residues 251-255; that stretch reads KLSKR. Lysine 254 lines the ATP pocket.

It belongs to the class-I aminoacyl-tRNA synthetase family. Glutamate--tRNA ligase type 1 subfamily. In terms of assembly, monomer.

It localises to the cytoplasm. The enzyme catalyses tRNA(Glu) + L-glutamate + ATP = L-glutamyl-tRNA(Glu) + AMP + diphosphate. Its function is as follows. Catalyzes the attachment of glutamate to tRNA(Glu) in a two-step reaction: glutamate is first activated by ATP to form Glu-AMP and then transferred to the acceptor end of tRNA(Glu). The sequence is that of Glutamate--tRNA ligase from Borreliella burgdorferi (strain ATCC 35210 / DSM 4680 / CIP 102532 / B31) (Borrelia burgdorferi).